The chain runs to 270 residues: Phosphatidylglycerol--prolipoprotein diacylglyceryl transferase (270 aa).

4 helical membrane passes run 19 to 39, 56 to 76, 92 to 112, and 116 to 136; these read FPVY…LWLA, LVLI…VIFE, QGGL…ILFA, and GVSF…GQAI. Residue R138 participates in a 1,2-diacyl-sn-glycero-3-phospho-(1'-sn-glycerol) binding. A run of 3 helical transmembrane segments spans residues 178–198, 206–226, and 236–256; these read HPTF…LLAL, GELF…VEGL, and LRIA…FIIV.

This sequence belongs to the Lgt family.

The protein resides in the cell membrane. The enzyme catalyses L-cysteinyl-[prolipoprotein] + a 1,2-diacyl-sn-glycero-3-phospho-(1'-sn-glycerol) = an S-1,2-diacyl-sn-glyceryl-L-cysteinyl-[prolipoprotein] + sn-glycerol 1-phosphate + H(+). It participates in protein modification; lipoprotein biosynthesis (diacylglyceryl transfer). Its function is as follows. Catalyzes the transfer of the diacylglyceryl group from phosphatidylglycerol to the sulfhydryl group of the N-terminal cysteine of a prolipoprotein, the first step in the formation of mature lipoproteins. In Bacillus cereus (strain Q1), this protein is Phosphatidylglycerol--prolipoprotein diacylglyceryl transferase.